The following is a 390-amino-acid chain: Immunoglobulin mu Fc receptor (390 aa).

Residues 1–16 (MDFWLWPLYFLPVSGA) form the signal peptide. At 17–251 (LRILPEVKVE…GSQSGREGQG (235 aa)) the chain is on the extracellular side. Positions 23–123 (VKVEGELGGS…KTQKVTLNVH (101 aa)) constitute an Ig-like domain. The tract at residues 33 to 115 (VTIKCPLPEM…AGMNTDRGKT (83 aa)) is CDR4. 2 disulfides stabilise this stretch: Cys-37–Cys-104 and Cys-49–Cys-58. Residues 40–45 (PEMHVR) form a CDR1 region. Residues 59-70 (GTVVSTTNFIKA) are CDR2. At Thr-92 the chain carries Phosphothreonine. Residues 106–115 (AGMNTDRGKT) are CDR3. The interval 166–204 (PAQRGKVPPVHHSSPTTQITHRPRVSRASSVAGDKPRTF) is disordered. A helical transmembrane segment spans residues 252–272 (FHILIPTILGLFLLALLGLVV). Residues 273-390 (KRAVERRKAL…DSDDYINVPA (118 aa)) are Cytoplasmic-facing. 2 stretches are compositionally biased toward low complexity: residues 293–311 (MRALESSQRPRGSPRPRSQ) and 325–334 (ADAAGTGEAP). The segment at 293–348 (MRALESSQRPRGSPRPRSQNNIYSACPRRARGADAAGTGEAPVPGPGAPLPPAPLQ) is disordered. Pro residues predominate over residues 335-346 (VPGPGAPLPPAP).

As to quaternary structure, interacts (via Ig-like domain) with IGHM (via CH4/Cmu4 domain), both secreted and membrane-bound IgM; the interaction is glycan-independent and multivalent theoretically involving up to eight binding sites for the IgM pentamer. Phosphorylated on both Tyr and Ser residues. Post-translationally, O-glycosylated. Sialylated. O-linked glycans regulate trafficking to the plasma membrane. In terms of tissue distribution, expressed by CD19-positive B cells and CD4-positive and CD8-positive T cell populations in primary and secondary lymphoid tissues (at protein level). Among B cell subsets, detected in a subset of bone marrow pro- and pre-B cells, in most follicular and memory B cells and in a small subset of germinal center B cells (at protein level). Expressed at lower levels in CD56-positive NK cells (at protein level). Expressed in lymph nodes, lung, thymus and kidneys. Very weak expression detected in spleen, liver, heart, and salivary gland.

The protein resides in the cell membrane. The protein localises to the early endosome membrane. It localises to the golgi apparatus. It is found in the trans-Golgi network membrane. Its subcellular location is the lysosome membrane. The protein resides in the secreted. High-affinity Fc receptor for immunoglobulin M (IgM), both secreted and membrane-bound IgM. Primarily regulates IgM transport and homeostasis. In lymphoid cells, enables exocytosis of membrane-bound IgM on the plasma membrane as well as endocytosis of IgM-antigen complexes toward lysosomes for degradation. In mucosal epithelium, mediates retrotranscytosis of antigen-IgM complexes across mucosal M cells toward antigen-presenting cells in mucosal lymphoid tissues. Triggers costimulatory signaling and mediates most of IgM effector functions involved in B cell development and primary immune response to infection. Likely limits tonic IgM BCR signaling to self-antigens for proper negative selection of autoreactive B cells in the bone marrow and for the maintenance of regulatory B cell pool in peripheral lymphoid organs. Mediates antibody responses to T cell-dependent and T cell-independent antigens and promotes induction of an efficient neutralizing IgG response. Engages in cross-talk with antigen-receptor signaling via the non-canonical NF-kappa-B, MAP kinases and calcium signaling pathways. The polypeptide is Immunoglobulin mu Fc receptor (Homo sapiens (Human)).